We begin with the raw amino-acid sequence, 382 residues long: UDP-N-acetylglucosamine--N-acetylmuramyl-(pentapeptide) pyrophosphoryl-undecaprenol N-acetylglucosamine transferase (382 aa).

UDP-N-acetyl-alpha-D-glucosamine is bound by residues 17 to 19 (TAG), Asn-137, Arg-179, Ser-213, and Gln-308.

The protein belongs to the glycosyltransferase 28 family. MurG subfamily.

The protein resides in the cell membrane. It carries out the reaction di-trans,octa-cis-undecaprenyl diphospho-N-acetyl-alpha-D-muramoyl-L-alanyl-D-glutamyl-meso-2,6-diaminopimeloyl-D-alanyl-D-alanine + UDP-N-acetyl-alpha-D-glucosamine = di-trans,octa-cis-undecaprenyl diphospho-[N-acetyl-alpha-D-glucosaminyl-(1-&gt;4)]-N-acetyl-alpha-D-muramoyl-L-alanyl-D-glutamyl-meso-2,6-diaminopimeloyl-D-alanyl-D-alanine + UDP + H(+). Its pathway is cell wall biogenesis; peptidoglycan biosynthesis. In terms of biological role, cell wall formation. Catalyzes the transfer of a GlcNAc subunit on undecaprenyl-pyrophosphoryl-MurNAc-pentapeptide (lipid intermediate I) to form undecaprenyl-pyrophosphoryl-MurNAc-(pentapeptide)GlcNAc (lipid intermediate II). The chain is UDP-N-acetylglucosamine--N-acetylmuramyl-(pentapeptide) pyrophosphoryl-undecaprenol N-acetylglucosamine transferase from Rhodococcus jostii (strain RHA1).